The following is a 459-amino-acid chain: ATP-dependent protease ATPase subunit HslU (459 aa).

ATP is bound by residues Val26, 68–73, Asp271, Glu337, and Arg409; that span reads GVGKTE.

It belongs to the ClpX chaperone family. HslU subfamily. As to quaternary structure, a double ring-shaped homohexamer of HslV is capped on each side by a ring-shaped HslU homohexamer. The assembly of the HslU/HslV complex is dependent on binding of ATP.

It is found in the cytoplasm. ATPase subunit of a proteasome-like degradation complex; this subunit has chaperone activity. The binding of ATP and its subsequent hydrolysis by HslU are essential for unfolding of protein substrates subsequently hydrolyzed by HslV. HslU recognizes the N-terminal part of its protein substrates and unfolds these before they are guided to HslV for hydrolysis. The chain is ATP-dependent protease ATPase subunit HslU from Xylella fastidiosa (strain M23).